The sequence spans 307 residues: Probable deoxyhypusine synthase (307 aa).

The active-site Nucleophile is the K278.

This sequence belongs to the deoxyhypusine synthase family. The cofactor is NAD(+).

It carries out the reaction [eIF5A protein]-L-lysine + spermidine = [eIF5A protein]-deoxyhypusine + propane-1,3-diamine. The protein operates within protein modification; eIF5A hypusination. Its function is as follows. Catalyzes the NAD-dependent oxidative cleavage of spermidine and the subsequent transfer of the butylamine moiety of spermidine to the epsilon-amino group of a specific lysine residue of the eIF-5A precursor protein to form the intermediate deoxyhypusine residue. The sequence is that of Probable deoxyhypusine synthase (dys) from Methanothermobacter thermautotrophicus (strain ATCC 29096 / DSM 1053 / JCM 10044 / NBRC 100330 / Delta H) (Methanobacterium thermoautotrophicum).